The primary structure comprises 296 residues: Homoserine kinase (296 aa).

85–95 contributes to the ATP binding site; it reads PLSRGLGSSAA.

This sequence belongs to the GHMP kinase family. Homoserine kinase subfamily.

It is found in the cytoplasm. It catalyses the reaction L-homoserine + ATP = O-phospho-L-homoserine + ADP + H(+). The protein operates within amino-acid biosynthesis; L-threonine biosynthesis; L-threonine from L-aspartate: step 4/5. Catalyzes the ATP-dependent phosphorylation of L-homoserine to L-homoserine phosphate. The chain is Homoserine kinase from Clostridium acetobutylicum (strain ATCC 824 / DSM 792 / JCM 1419 / IAM 19013 / LMG 5710 / NBRC 13948 / NRRL B-527 / VKM B-1787 / 2291 / W).